A 145-amino-acid polypeptide reads, in one-letter code: Large ribosomal subunit protein bL19 (145 aa).

Residues 114 to 136 (IAEKMESPAAKATREAAKKEAKA) show a composition bias toward basic and acidic residues. The disordered stretch occupies residues 114–145 (IAEKMESPAAKATREAAKKEAKAAKKNAAPAE).

The protein belongs to the bacterial ribosomal protein bL19 family.

Its function is as follows. This protein is located at the 30S-50S ribosomal subunit interface and may play a role in the structure and function of the aminoacyl-tRNA binding site. In Methylocella silvestris (strain DSM 15510 / CIP 108128 / LMG 27833 / NCIMB 13906 / BL2), this protein is Large ribosomal subunit protein bL19.